Here is a 256-residue protein sequence, read N- to C-terminus: Trypsin alpha (256 aa).

The signal sequence occupies residues 1–22 (MLKIVILLSAVVCALGGTVPEG). A propeptide spans 23 to 30 (LLPQLDGR) (activation peptide). The region spanning 31-254 (IVGGSATTIS…LRSWVVSTAN (224 aa)) is the Peptidase S1 domain. Residues Cys-56 and Cys-72 are joined by a disulfide bond. Catalysis depends on charge relay system residues His-71 and Asp-116. 2 disulfides stabilise this stretch: Cys-180-Cys-197 and Cys-206-Cys-230. Ser-210 acts as the Charge relay system in catalysis.

The protein belongs to the peptidase S1 family. In terms of tissue distribution, synthesized in the midgut of both larvae and adults, primarily in the ventriculus and gastric caeca.

It localises to the secreted. Its subcellular location is the extracellular space. It carries out the reaction Preferential cleavage: Arg-|-Xaa, Lys-|-Xaa.. In Drosophila melanogaster (Fruit fly), this protein is Trypsin alpha (alphaTry).